We begin with the raw amino-acid sequence, 600 residues long: 1-deoxy-D-xylulose-5-phosphate synthase (600 aa).

Thiamine diphosphate-binding positions include His-63 and 104–106 (GHS). Asp-135 is a binding site for Mg(2+). Residues 136-137 (GA), Asn-164, Tyr-271, and Glu-352 contribute to the thiamine diphosphate site. Residue Asn-164 participates in Mg(2+) binding.

The protein belongs to the transketolase family. DXPS subfamily. In terms of assembly, homodimer. The cofactor is Mg(2+). It depends on thiamine diphosphate as a cofactor.

The enzyme catalyses D-glyceraldehyde 3-phosphate + pyruvate + H(+) = 1-deoxy-D-xylulose 5-phosphate + CO2. It functions in the pathway metabolic intermediate biosynthesis; 1-deoxy-D-xylulose 5-phosphate biosynthesis; 1-deoxy-D-xylulose 5-phosphate from D-glyceraldehyde 3-phosphate and pyruvate: step 1/1. Its function is as follows. Catalyzes the acyloin condensation reaction between C atoms 2 and 3 of pyruvate and glyceraldehyde 3-phosphate to yield 1-deoxy-D-xylulose-5-phosphate (DXP). The protein is 1-deoxy-D-xylulose-5-phosphate synthase of Campylobacter fetus subsp. fetus (strain 82-40).